Reading from the N-terminus, the 297-residue chain is Golgi-associated RAB2 interactor protein 1A (297 aa).

The segment at 226 to 257 is disordered; it reads SNRHQTSRDRHTDTATETDNSGNCKSTPLVAS. The span at 240-257 shows a compositional bias: polar residues; it reads ATETDNSGNCKSTPLVAS.

Belongs to the GARIN family. As to quaternary structure, interacts (via N-terminus) with RAB2B (in GTP-bound form). As to expression, expressed in testis (at protein level).

Its subcellular location is the golgi apparatus. RAB2B effector protein required for accurate acrosome formation and normal male fertility. The polypeptide is Golgi-associated RAB2 interactor protein 1A (Mus musculus (Mouse)).